A 107-amino-acid polypeptide reads, in one-letter code: Large ribosomal subunit protein uL24 (107 aa).

It belongs to the universal ribosomal protein uL24 family. As to quaternary structure, part of the 50S ribosomal subunit.

One of two assembly initiator proteins, it binds directly to the 5'-end of the 23S rRNA, where it nucleates assembly of the 50S subunit. In terms of biological role, one of the proteins that surrounds the polypeptide exit tunnel on the outside of the subunit. In Coxiella burnetii (strain Dugway 5J108-111), this protein is Large ribosomal subunit protein uL24.